Consider the following 71-residue polypeptide: uncharacterized protein (71 aa).

This is an uncharacterized protein from Homo sapiens (Human).